The chain runs to 446 residues: Sensor-type histidine kinase PrrB (446 aa).

A run of 2 helical transmembrane segments spans residues 19–39 (VVAT…VVWV) and 151–171 (LLIC…LAAF). Residues 172–222 (AVRPFKQLAEQTRSIDAGDEAPRVEVHGASEAIEIAEAMRGMLQRIWNEQN) enclose the HAMP domain. Residues 237–446 (VSSHELRTPL…RLVLRLPGPS (210 aa)) form the Histidine kinase domain. Histidine 240 carries the post-translational modification Phosphohistidine; by autocatalysis.

Autophosphorylated.

It is found in the cell membrane. It catalyses the reaction ATP + protein L-histidine = ADP + protein N-phospho-L-histidine.. Functionally, member of the two-component regulatory system PrrB/PrrA that is involved specifically in early intracellular multiplication of Mycobacterium and is essential for its viability. Functions as a sensor protein kinase which is autophosphorylated at a histidine residue and transfers its phosphate group to the conserved aspartic acid residue in the regulatory domain of PrrA. In turn, PrrA binds to the upstream promoter regions of target genes including itself to positively regulate their expression. The protein is Sensor-type histidine kinase PrrB (prrB) of Mycobacterium bovis (strain ATCC BAA-935 / AF2122/97).